The primary structure comprises 955 residues: Glycine dehydrogenase (decarboxylating) (955 aa).

Lysine 705 is subject to N6-(pyridoxal phosphate)lysine.

Belongs to the GcvP family. The glycine cleavage system is composed of four proteins: P, T, L and H. The cofactor is pyridoxal 5'-phosphate.

The catalysed reaction is N(6)-[(R)-lipoyl]-L-lysyl-[glycine-cleavage complex H protein] + glycine + H(+) = N(6)-[(R)-S(8)-aminomethyldihydrolipoyl]-L-lysyl-[glycine-cleavage complex H protein] + CO2. In terms of biological role, the glycine cleavage system catalyzes the degradation of glycine. The P protein binds the alpha-amino group of glycine through its pyridoxal phosphate cofactor; CO(2) is released and the remaining methylamine moiety is then transferred to the lipoamide cofactor of the H protein. In Aliivibrio salmonicida (strain LFI1238) (Vibrio salmonicida (strain LFI1238)), this protein is Glycine dehydrogenase (decarboxylating).